The sequence spans 1690 residues: DNA-directed RNA polymerase subunit beta' (1690 aa).

Zn(2+)-binding residues include Cys63, Cys65, Cys78, and Cys81. Mg(2+)-binding residues include Asp753, Asp755, and Asp757. Residues Cys1107, Cys1295, Cys1302, and Cys1305 each coordinate Zn(2+).

Belongs to the RNA polymerase beta' chain family. The RNAP catalytic core consists of 2 alpha, 1 beta, 1 beta' and 1 omega subunit. When a sigma factor is associated with the core the holoenzyme is formed, which can initiate transcription. Mg(2+) serves as cofactor. Requires Zn(2+) as cofactor.

The catalysed reaction is RNA(n) + a ribonucleoside 5'-triphosphate = RNA(n+1) + diphosphate. Its function is as follows. DNA-dependent RNA polymerase catalyzes the transcription of DNA into RNA using the four ribonucleoside triphosphates as substrates. The sequence is that of DNA-directed RNA polymerase subunit beta' from Thermotoga sp. (strain RQ2).